The chain runs to 137 residues: NADPH-dependent 7-cyano-7-deazaguanine reductase (137 aa).

C45 functions as the Thioimide intermediate in the catalytic mechanism. D52 functions as the Proton donor in the catalytic mechanism. Residues 68–70 and 87–88 contribute to the substrate site; these read VEL and QE.

It belongs to the GTP cyclohydrolase I family. QueF type 1 subfamily.

The protein localises to the cytoplasm. The enzyme catalyses 7-aminomethyl-7-carbaguanine + 2 NADP(+) = 7-cyano-7-deazaguanine + 2 NADPH + 3 H(+). The protein operates within tRNA modification; tRNA-queuosine biosynthesis. Catalyzes the NADPH-dependent reduction of 7-cyano-7-deazaguanine (preQ0) to 7-aminomethyl-7-deazaguanine (preQ1). The polypeptide is NADPH-dependent 7-cyano-7-deazaguanine reductase (Thermotoga petrophila (strain ATCC BAA-488 / DSM 13995 / JCM 10881 / RKU-1)).